The chain runs to 457 residues: uncharacterized protein (457 aa).

The 59-residue stretch at 6–64 (PVHKGEVLDVTIMDLTYQGMGVAKVDNYPIFIENALPEEKITVKVTKTTKNFAFGDVEK) folds into the TRAM domain. Residues Gln-287, Tyr-316, Glu-337, and Asp-385 each coordinate S-adenosyl-L-methionine. Cys-412 functions as the Nucleophile in the catalytic mechanism.

Belongs to the class I-like SAM-binding methyltransferase superfamily. RNA M5U methyltransferase family.

This is an uncharacterized protein from Lactiplantibacillus plantarum (strain ATCC BAA-793 / NCIMB 8826 / WCFS1) (Lactobacillus plantarum).